We begin with the raw amino-acid sequence, 466 residues long: Neuronal acetylcholine receptor subunit non-alpha-3 (466 aa).

Positions 1–28 (MKLQISGLLLVTAVAYATIEAPEEFVSL) are cleaved as a signal peptide. Residues 29–235 (AEMEDTLLRN…VTYSFILKRL (207 aa)) lie on the Extracellular side of the membrane. Residues asparagine 54, asparagine 141, asparagine 169, and asparagine 208 are each glycosylated (N-linked (GlcNAc...) asparagine). Residues cysteine 156 and cysteine 170 are joined by a disulfide bond. 3 helical membrane-spanning segments follow: residues 236–260 (PLFYTLFLIIPCLGLSFLTVLVFYL), 268–285 (LLLSTSVLVSLTVFLLVI), and 302–323 (YLLFIMIFVTFSIIVTLFVINV). Residues 324-438 (HHRSSATYHP…WKFVAQVLDR (115 aa)) lie on the Cytoplasmic side of the membrane. A helical transmembrane segment spans residues 439–456 (IFLWVFLTASVLGTILIF).

Belongs to the ligand-gated ion channel (TC 1.A.9) family. Acetylcholine receptor (TC 1.A.9.1) subfamily. As to quaternary structure, neuronal AChR seems to be composed of two different type of subunits: alpha and non-alpha (beta). In terms of tissue distribution, retina, tectum and brain.

It localises to the postsynaptic cell membrane. Its subcellular location is the cell membrane. Functionally, after binding acetylcholine, the AChR responds by an extensive change in conformation that affects all subunits and leads to opening of an ion-conducting channel across the plasma membrane. In Carassius auratus (Goldfish), this protein is Neuronal acetylcholine receptor subunit non-alpha-3.